Consider the following 697-residue polypeptide: Long-chain-fatty-acid--CoA ligase 6 (697 aa).

The chain crosses the membrane as a helical; Signal-anchor for type III membrane protein span at residues Leu-25–Thr-45. Residues His-46–Met-697 are Cytoplasmic-facing.

It belongs to the ATP-dependent AMP-binding enzyme family. The cofactor is Mg(2+). As to expression, expressed predominantly in erythrocyte precursors, in particular in reticulocytes, fetal blood cells derived from fetal liver, hemopoietic stem cells from cord blood, bone marrow and brain.

The protein localises to the mitochondrion outer membrane. It localises to the peroxisome membrane. Its subcellular location is the microsome membrane. It is found in the endoplasmic reticulum membrane. It catalyses the reaction a long-chain fatty acid + ATP + CoA = a long-chain fatty acyl-CoA + AMP + diphosphate. The enzyme catalyses (5Z,8Z,11Z,14Z)-eicosatetraenoate + ATP + CoA = (5Z,8Z,11Z,14Z)-eicosatetraenoyl-CoA + AMP + diphosphate. The catalysed reaction is hexadecanoate + ATP + CoA = hexadecanoyl-CoA + AMP + diphosphate. It carries out the reaction (E)-hexadec-2-enoate + ATP + CoA = (2E)-hexadecenoyl-CoA + AMP + diphosphate. It catalyses the reaction 15-hydroxy-(5Z,8Z,11Z,13E)-eicosatetraenoate + ATP + CoA = 15-hydroxy-(5Z,8Z,11Z,13E)-eicosatetraenoyl-CoA + AMP + diphosphate. The enzyme catalyses 12-hydroxy-(5Z,8Z,10E,14Z)-eicosatetraenoate + ATP + CoA = 12-hydroxy-(5Z,8Z,10E,14Z)-eicosatetraenoyl-CoA + AMP + diphosphate. The catalysed reaction is 5-hydroxy-(6E,8Z,11Z,14Z)-eicosatetraenoate + ATP + CoA = 5-hydroxy-(6E,8Z,11Z,14Z)-eicosatetraenoyl-CoA + AMP + diphosphate. In terms of biological role, catalyzes the conversion of long-chain fatty acids to their active form acyl-CoA for both synthesis of cellular lipids, and degradation via beta-oxidation. Plays an important role in fatty acid metabolism in brain and the acyl-CoAs produced may be utilized exclusively for the synthesis of the brain lipid. The chain is Long-chain-fatty-acid--CoA ligase 6 from Homo sapiens (Human).